The sequence spans 447 residues: Signal recognition particle 54 kDa protein (447 aa).

GTP is bound by residues 103 to 110, 185 to 189, and 245 to 248; these read GVQGSGKT, DTAGR, and TKMD.

The protein belongs to the GTP-binding SRP family. SRP54 subfamily. As to quaternary structure, part of the signal recognition particle protein translocation system, which is composed of SRP and FtsY. Archaeal SRP consists of a 7S RNA molecule of 300 nucleotides and two protein subunits: SRP54 and SRP19.

The protein localises to the cytoplasm. It catalyses the reaction GTP + H2O = GDP + phosphate + H(+). Its function is as follows. Involved in targeting and insertion of nascent membrane proteins into the cytoplasmic membrane. Binds to the hydrophobic signal sequence of the ribosome-nascent chain (RNC) as it emerges from the ribosomes. The SRP-RNC complex is then targeted to the cytoplasmic membrane where it interacts with the SRP receptor FtsY. This is Signal recognition particle 54 kDa protein from Saccharolobus islandicus (strain L.S.2.15 / Lassen #1) (Sulfolobus islandicus).